Here is a 305-residue protein sequence, read N- to C-terminus: Probable cell division protein WhiA (305 aa).

A DNA-binding region (H-T-H motif) is located at residues 272–305 (SIQQLADSLTVPITKSGVNHRLRKINKIADELTD).

This sequence belongs to the WhiA family.

Functionally, involved in cell division and chromosome segregation. This Streptococcus suis (strain 98HAH33) protein is Probable cell division protein WhiA.